The primary structure comprises 346 residues: S-adenosylmethionine:tRNA ribosyltransferase-isomerase (346 aa).

The protein belongs to the QueA family. Monomer.

Its subcellular location is the cytoplasm. It carries out the reaction 7-aminomethyl-7-carbaguanosine(34) in tRNA + S-adenosyl-L-methionine = epoxyqueuosine(34) in tRNA + adenine + L-methionine + 2 H(+). The protein operates within tRNA modification; tRNA-queuosine biosynthesis. Its function is as follows. Transfers and isomerizes the ribose moiety from AdoMet to the 7-aminomethyl group of 7-deazaguanine (preQ1-tRNA) to give epoxyqueuosine (oQ-tRNA). The sequence is that of S-adenosylmethionine:tRNA ribosyltransferase-isomerase from Shewanella frigidimarina (strain NCIMB 400).